The chain runs to 206 residues: 2,3-bisphosphoglycerate-dependent phosphoglycerate mutase (206 aa).

Residues 9 to 16 (RHGQSEWN), 22 to 23 (TG), Arg61, 88 to 91 (ERDY), Lys99, 115 to 116 (RR), and 159 to 160 (GN) each bind substrate. Catalysis depends on His10, which acts as the Tele-phosphohistidine intermediate. Glu88 serves as the catalytic Proton donor/acceptor.

This sequence belongs to the phosphoglycerate mutase family. BPG-dependent PGAM subfamily. In terms of assembly, homodimer.

The enzyme catalyses (2R)-2-phosphoglycerate = (2R)-3-phosphoglycerate. It functions in the pathway carbohydrate degradation; glycolysis; pyruvate from D-glyceraldehyde 3-phosphate: step 3/5. Its function is as follows. Catalyzes the interconversion of 2-phosphoglycerate and 3-phosphoglycerate. This is 2,3-bisphosphoglycerate-dependent phosphoglycerate mutase from Bartonella quintana (strain Toulouse) (Rochalimaea quintana).